The primary structure comprises 102 residues: Nuclear protein 2 (102 aa).

Disordered stretches follow at residues 1–26 (MDPP…ALPT) and 46–102 (PASG…TRLA). Residues 85-102 (QRKRRQRQLQPRPRTRLA) are compositionally biased toward basic residues.

The protein belongs to the NUPR family.

The protein localises to the nucleus. Acts as a transcriptional repressor by inhibiting gene expression at the NUPR1 promoter in a p53/TP53-dependent manner in cancer cells. Involved in the G1 cell cycle arrest, and in a decrease in cell viability and cell proliferation of pancreatic cancer cells. Plays a role as a negative regulator of the protumoral factor NUPR1. The protein is Nuclear protein 2 of Mus musculus (Mouse).